The chain runs to 96 residues: Phosphoribosyl-ATP pyrophosphatase (96 aa).

It belongs to the PRA-PH family.

The protein localises to the cytoplasm. It catalyses the reaction 1-(5-phospho-beta-D-ribosyl)-ATP + H2O = 1-(5-phospho-beta-D-ribosyl)-5'-AMP + diphosphate + H(+). The protein operates within amino-acid biosynthesis; L-histidine biosynthesis; L-histidine from 5-phospho-alpha-D-ribose 1-diphosphate: step 2/9. The chain is Phosphoribosyl-ATP pyrophosphatase from Methanococcus vannielii (strain ATCC 35089 / DSM 1224 / JCM 13029 / OCM 148 / SB).